The primary structure comprises 441 residues: Ribosomal protein uS12 methylthiotransferase RimO (441 aa).

The MTTase N-terminal domain occupies 8–118; it reads PKIGFVSLGC…VLEHVHHYVP (111 aa). Residues cysteine 17, cysteine 53, cysteine 82, cysteine 150, cysteine 154, and cysteine 157 each coordinate [4Fe-4S] cluster. In terms of domain architecture, Radical SAM core spans 136 to 373; that stretch reads LTPRHYAYLK…MQLQQQISAE (238 aa). A TRAM domain is found at 376–441; it reads QEKVGREILV…DEYDLWGSRV (66 aa).

Belongs to the methylthiotransferase family. RimO subfamily. Requires [4Fe-4S] cluster as cofactor.

It localises to the cytoplasm. It catalyses the reaction L-aspartate(89)-[ribosomal protein uS12]-hydrogen + (sulfur carrier)-SH + AH2 + 2 S-adenosyl-L-methionine = 3-methylsulfanyl-L-aspartate(89)-[ribosomal protein uS12]-hydrogen + (sulfur carrier)-H + 5'-deoxyadenosine + L-methionine + A + S-adenosyl-L-homocysteine + 2 H(+). Its function is as follows. Catalyzes the methylthiolation of an aspartic acid residue of ribosomal protein uS12. This chain is Ribosomal protein uS12 methylthiotransferase RimO, found in Shigella sonnei (strain Ss046).